A 424-amino-acid chain; its full sequence is Enolase (424 aa).

Q164 lines the (2R)-2-phosphoglycerate pocket. Residue E206 is the Proton donor of the active site. D243, E284, and D311 together coordinate Mg(2+). 4 residues coordinate (2R)-2-phosphoglycerate: K336, R365, S366, and K387. The Proton acceptor role is filled by K336.

It belongs to the enolase family. It depends on Mg(2+) as a cofactor.

The protein resides in the cytoplasm. It is found in the secreted. It localises to the cell surface. The enzyme catalyses (2R)-2-phosphoglycerate = phosphoenolpyruvate + H2O. Its pathway is carbohydrate degradation; glycolysis; pyruvate from D-glyceraldehyde 3-phosphate: step 4/5. Functionally, catalyzes the reversible conversion of 2-phosphoglycerate (2-PG) into phosphoenolpyruvate (PEP). It is essential for the degradation of carbohydrates via glycolysis. This chain is Enolase, found in Wolbachia sp. subsp. Drosophila simulans (strain wRi).